A 755-amino-acid chain; its full sequence is 1,4-alpha-glucan branching enzyme GlgB (755 aa).

The active-site Nucleophile is the Asp431. The Proton donor role is filled by Glu484.

This sequence belongs to the glycosyl hydrolase 13 family. GlgB subfamily. As to quaternary structure, monomer.

It carries out the reaction Transfers a segment of a (1-&gt;4)-alpha-D-glucan chain to a primary hydroxy group in a similar glucan chain.. It functions in the pathway glycan biosynthesis; glycogen biosynthesis. Functionally, catalyzes the formation of the alpha-1,6-glucosidic linkages in glycogen by scission of a 1,4-alpha-linked oligosaccharide from growing alpha-1,4-glucan chains and the subsequent attachment of the oligosaccharide to the alpha-1,6 position. This chain is 1,4-alpha-glucan branching enzyme GlgB, found in Prochlorococcus marinus (strain NATL1A).